Here is a 359-residue protein sequence, read N- to C-terminus: S-adenosylmethionine-dependent nucleotide dehydratase RSAD2 (359 aa).

Residues 43-67 (QTPARKISRPESRTSKQKEGSRAPF) form a disordered region. Residues 50–63 (SRPESRTSKQKEGS) show a composition bias toward basic and acidic residues. Positions 67 to 287 (FTTPSSVNYH…LERHQSIQCL (221 aa)) constitute a Radical SAM core domain. [4Fe-4S] cluster-binding residues include Cys81, Cys85, and Cys88.

It belongs to the radical SAM superfamily. RSAD2 family. [4Fe-4S] cluster serves as cofactor.

The protein localises to the endoplasmic reticulum membrane. Functionally, interferon-inducible iron-sulfur (4FE-4S) cluster-binding antiviral protein which plays a major role in the cell antiviral state induced by type I and type II interferon. In Danio rerio (Zebrafish), this protein is S-adenosylmethionine-dependent nucleotide dehydratase RSAD2.